Consider the following 461-residue polypeptide: Cysteine--tRNA ligase (461 aa).

A Zn(2+)-binding site is contributed by C28. The 'HIGH' region signature appears at 30–40 (ITVYDLCHIGH). C209, H234, and E238 together coordinate Zn(2+). Positions 266 to 270 (KMSKS) match the 'KMSKS' region motif. ATP is bound at residue K269.

Belongs to the class-I aminoacyl-tRNA synthetase family. As to quaternary structure, monomer. It depends on Zn(2+) as a cofactor.

It localises to the cytoplasm. It carries out the reaction tRNA(Cys) + L-cysteine + ATP = L-cysteinyl-tRNA(Cys) + AMP + diphosphate. The protein is Cysteine--tRNA ligase of Klebsiella pneumoniae (strain 342).